The sequence spans 144 residues: Bacilliredoxin SSP1311 (144 aa).

Belongs to the bacilliredoxin family.

In Staphylococcus saprophyticus subsp. saprophyticus (strain ATCC 15305 / DSM 20229 / NCIMB 8711 / NCTC 7292 / S-41), this protein is Bacilliredoxin SSP1311.